The chain runs to 556 residues: Glutamine--tRNA ligase (556 aa).

A 'HIGH' region motif is present at residues 33-43 (PEPNGYLHIGH). ATP-binding positions include 34–36 (EPN) and 40–46 (HIGHAKS). L-glutamine contacts are provided by D66 and Y210. ATP contacts are provided by residues T229, 259-260 (RL), and 267-269 (MSK). The 'KMSKS' region motif lies at 266-270 (VMSKR).

Belongs to the class-I aminoacyl-tRNA synthetase family. As to quaternary structure, monomer.

It localises to the cytoplasm. The enzyme catalyses tRNA(Gln) + L-glutamine + ATP = L-glutaminyl-tRNA(Gln) + AMP + diphosphate. In Clostridium kluyveri (strain ATCC 8527 / DSM 555 / NBRC 12016 / NCIMB 10680 / K1), this protein is Glutamine--tRNA ligase.